The primary structure comprises 306 residues: Protein-methionine-sulfoxide reductase catalytic subunit MsrP (306 aa).

The tat-type signal signal peptide spans 1–44 (MLIRHAPDLTDNDVTGHGLYLRRRDFIGGAAGLGLMAAAGSASA). Mo-molybdopterin contacts are provided by residues Asn69, 72 to 73 (YE), Cys127, Thr162, Asn210, Arg215, and 226 to 228 (GIK).

It belongs to the MsrP family. Heterodimer of a catalytic subunit (MsrP) and a heme-binding subunit (MsrQ). Requires Mo-molybdopterin as cofactor. In terms of processing, predicted to be exported by the Tat system. The position of the signal peptide cleavage has not been experimentally proven.

The protein localises to the periplasm. The catalysed reaction is L-methionyl-[protein] + a quinone + H2O = L-methionyl-(S)-S-oxide-[protein] + a quinol. The enzyme catalyses L-methionyl-[protein] + a quinone + H2O = L-methionyl-(R)-S-oxide-[protein] + a quinol. Part of the MsrPQ system that repairs oxidized periplasmic proteins containing methionine sulfoxide residues (Met-O), using respiratory chain electrons. Thus protects these proteins from oxidative-stress damage caused by reactive species of oxygen and chlorine generated by the host defense mechanisms. MsrPQ is essential for the maintenance of envelope integrity under bleach stress, rescuing a wide series of structurally unrelated periplasmic proteins from methionine oxidation. The catalytic subunit MsrP is non-stereospecific, being able to reduce both (R-) and (S-) diastereoisomers of methionine sulfoxide. In Caulobacter sp. (strain K31), this protein is Protein-methionine-sulfoxide reductase catalytic subunit MsrP.